Reading from the N-terminus, the 938-residue chain is Catenin delta-1 (938 aa).

M1 bears the N-acetylmethionine mark. The necessary and sufficient for interaction with CCDC85B stretch occupies residues M1–M357. Position 4 is a phosphoserine (S4). A coiled-coil region spans residues A10 to V46. S47 bears the Phosphoserine mark. Position 59 is a phosphothreonine (T59). Position 112 is a phosphotyrosine; by FYN (Y112). Position 125 is a phosphoserine (S125). Residues Y217 and Y221 each carry the phosphotyrosine modification. A Phosphoserine modification is found at S225. Y228 carries the phosphotyrosine modification. Phosphoserine occurs at positions 230 and 252. The residue at position 257 (Y257) is a Phosphotyrosine. 2 positions are modified to phosphoserine: S268 and S269. A Phosphotyrosine modification is found at Y280. Phosphoserine is present on S288. Y291 is subject to Phosphotyrosine. S300 carries the phosphoserine modification. The residue at position 304 (T304) is a Phosphothreonine. Residues S320, S346, S349, and S352 each carry the phosphoserine modification. 4 ARM repeats span residues P358–Y395, D398–F437, Q441–T475, and L476–C516. A Glycyl lysine isopeptide (Lys-Gly) (interchain with G-Cter in SUMO2) cross-link involves residue K421. K517 is covalently cross-linked (Glycyl lysine isopeptide (Lys-Gly) (interchain with G-Cter in SUMO2)). 6 ARM repeats span residues L534–S573, L583–G624, A653–A693, R700–V739, D740–N780, and T781–L826. S617 bears the Phosphoserine mark. The short motif at K622–F629 is the Nuclear localization signal (NLS) element. Phosphoserine is present on S713. Residues S811, S847, S857, S859, S861, and S864 each carry the phosphoserine modification. The interval N855–I938 is disordered. Residue Y865 is modified to Phosphotyrosine. S868 is modified (phosphoserine). Phosphothreonine is present on T869. Basic and acidic residues predominate over residues R875 to I888. S879 bears the Phosphoserine mark. Residue K882 forms a Glycyl lysine isopeptide (Lys-Gly) (interchain with G-Cter in SUMO2) linkage. Residues N892 to N908 are compositionally biased toward polar residues. Phosphoserine is present on S899. Position 904 is a phosphotyrosine (Y904). T906 and T916 each carry phosphothreonine. The span at E909–D922 shows a compositional bias: basic and acidic residues. S920 carries the post-translational modification Phosphoserine.

The protein belongs to the beta-catenin family. Belongs to a multiprotein cell-cell adhesion complex that also contains E-cadherin/CDH1, alpha-catenin/CTNNA1, beta-catenin/CTNNB1, and gamma-catenin/JUP. Binds to the C-terminal fragment of PSEN1 and mutually competes for CDH1. Interacts with ZBTB33. Interacts with GLIS2. Interacts with FER. Interacts with NANOS1 (via N-terminal region). Interacts (via N-terminus) with GNA12; the interaction regulates CDH1-mediated cell-cell adhesion. Interacts with GNA13. Component of a cadherin:catenin adhesion complex composed of at least of CDH26, beta-catenin/CTNNB1, alpha-catenin/CTNNA1 and p120 catenin/CTNND1. Interacts with CCDC85B. Interacts with PLPP3; negatively regulates the PLPP3-mediated stabilization of CTNNB1. Interacts with DSG3; the interaction facilitates DSG3 localization and retention at cell-cell junctions. Interacts with CTNND1/p120-catenin; the interaction controls CADH5 endocytosis. Phosphorylated by FER and other protein-tyrosine kinases. Phosphorylated at Ser-288 by PAK5. Dephosphorylated by PTPRJ. Expressed in basal keratinocytes (at protein level).

The protein localises to the cell junction. It localises to the adherens junction. Its subcellular location is the cytoplasm. The protein resides in the nucleus. It is found in the cell membrane. Its function is as follows. Key regulator of cell-cell adhesion that associates with and regulates the cell adhesion properties of both C-, E- and N-cadherins, being critical for their surface stability. Promotes localization and retention of DSG3 at cell-cell junctions, via its interaction with DSG3. Beside cell-cell adhesion, regulates gene transcription through several transcription factors including ZBTB33/Kaiso2 and GLIS2, and the activity of Rho family GTPases and downstream cytoskeletal dynamics. Implicated both in cell transformation by SRC and in ligand-induced receptor signaling through the EGF, PDGF, CSF-1 and ERBB2 receptors. The sequence is that of Catenin delta-1 (Ctnnd1) from Mus musculus (Mouse).